Consider the following 136-residue polypeptide: Protein K5 (136 aa).

This sequence belongs to the poxviridae K5 protein family.

The chain is Protein K5 from Homo sapiens (Human).